The following is a 621-amino-acid chain: Intermediate filament protein ifc-2 (621 aa).

The interval 20-55 (SGAYTSGFGGLVSGMSSAGAICTTQIRDAREREKRE) is head. Residues 52 to 400 (EKREIGLLND…VLLNGANVTT (349 aa)) enclose the IF rod domain. Residues 56–87 (IGLLNDRLADYIEKVRFLEAQNQCLSHDIDIL) are coil 1A. A linker 1 region spans residues 88-100 (RRGFSGGGHVSGL). Residues 101 to 238 (YDTEIAQAKR…TENSTRIEQE (138 aa)) form a coil 1B region. The tract at residues 239–256 (LVFIRRDTTAENRDYFRH) is linker 12. A coil 2 region spans residues 257-400 (ELQAAIRDIR…VLLNGANVTT (144 aa)). The interval 401–549 (YVSNTHPSGV…RVDVGGFRVE (149 aa)) is tail. Positions 508 to 621 (SGRSFHSWYL…EERAWFVYLN (114 aa)) constitute an LTD domain.

The protein belongs to the intermediate filament family.

It is found in the cytoplasm. Functionally, cytoplasmic intermediate filaments provide mechanical strength to cells. The chain is Intermediate filament protein ifc-2 from Caenorhabditis briggsae.